Here is a 972-residue protein sequence, read N- to C-terminus: 116 kDa U5 small nuclear ribonucleoprotein component (972 aa).

N-acetylmethionine is present on methionine 1. Positions 1–54 (MDTDLYDEFGNYIGPELDSDEDDDELGRETKDLDEMDDDDDDDDIGDHDDDHPG) are disordered. Acidic residues-rich tracts occupy residues 17 to 26 (LDSDEDDDEL) and 34 to 48 (DEMD…IGDH). Serine 19 carries the post-translational modification Phosphoserine. Lysine 64 participates in a covalent cross-link: Glycyl lysine isopeptide (Lys-Gly) (interchain with G-Cter in SUMO1); alternate. Lysine 64 is covalently cross-linked (Glycyl lysine isopeptide (Lys-Gly) (interchain with G-Cter in SUMO2); alternate). A Phosphothreonine modification is found at threonine 86. Positions 127-409 (ELIRNVTLCG…GIHLTKEELK (283 aa)) constitute a tr-type G domain. Residues 136-143 (GHLHHGKT), 204-208 (DTPGH), and 258-261 (NKID) each bind GTP.

Belongs to the TRAFAC class translation factor GTPase superfamily. Classic translation factor GTPase family. EF-G/EF-2 subfamily. As to quaternary structure, component of the U5 snRNP and the U4/U6-U5 tri-snRNP complex, a building block of the spliceosome. The U4/U6-U5 tri-snRNP complex is composed of the U4, U6 and U5 snRNAs and at least PRPF3, PRPF4, PRPF6, PRPF8, PRPF31, SNRNP200, TXNL4A, SNRNP40, DDX23, CD2BP2, PPIH, SNU13, EFTUD2, SART1 and USP39. Component of the pre-catalytic, catalytic and post-catalytic spliceosome complexes. Component of the minor spliceosome, which splices U12-type introns. Within this complex, interacts with CRIPT. Interacts with ERBB4 and PRPF8. Interacts with PIH1D1. Interacts with RPAP3 and URI1 in a ZNHIT2-dependent manner. Interacts with NRDE2. Interacts with FAM50A. Interacts with UBL5.

The protein resides in the nucleus. Functionally, required for pre-mRNA splicing as component of the spliceosome, including pre-catalytic, catalytic and post-catalytic spliceosomal complexes. Component of the U5 snRNP and the U4/U6-U5 tri-snRNP complex, a building block of the spliceosome. As a component of the minor spliceosome, involved in the splicing of U12-type introns in pre-mRNAs. The chain is 116 kDa U5 small nuclear ribonucleoprotein component (EFTUD2) from Pongo abelii (Sumatran orangutan).